A 370-amino-acid chain; its full sequence is Quinolinate synthase (370 aa).

The iminosuccinate site is built by His-62 and Ser-83. Residue Cys-128 coordinates [4Fe-4S] cluster. Iminosuccinate contacts are provided by residues 154–156 (YAN) and Ser-171. [4Fe-4S] cluster is bound at residue Cys-215. Iminosuccinate contacts are provided by residues 241 to 243 (HPE) and Thr-258. Cys-312 is a binding site for [4Fe-4S] cluster.

The protein belongs to the quinolinate synthase family. Type 1 subfamily. [4Fe-4S] cluster serves as cofactor.

It is found in the cytoplasm. The catalysed reaction is iminosuccinate + dihydroxyacetone phosphate = quinolinate + phosphate + 2 H2O + H(+). It functions in the pathway cofactor biosynthesis; NAD(+) biosynthesis; quinolinate from iminoaspartate: step 1/1. Functionally, catalyzes the condensation of iminoaspartate with dihydroxyacetone phosphate to form quinolinate. This is Quinolinate synthase from Neisseria meningitidis serogroup B (strain ATCC BAA-335 / MC58).